A 1317-amino-acid chain; its full sequence is uncharacterized protein (1317 aa).

This sequence belongs to the oxoprolinase family.

This is an uncharacterized protein from Schizosaccharomyces pombe (strain 972 / ATCC 24843) (Fission yeast).